A 732-amino-acid polypeptide reads, in one-letter code: Polyribonucleotide nucleotidyltransferase (732 aa).

Mg(2+) is bound by residues Asp483 and Asp489. A KH domain is found at 550–609 (PRIVTVQIPVDKIGELIGPKGKNIRGIQDETGAELSVEDDGTVTIAAVGGDSMERAKQMV). Positions 619 to 687 (GETYEGTVKT…ERGRLRLSMK (69 aa)) constitute an S1 motif domain. The interval 684–732 (LSMKALLPKPEGMPDEPPQSERPRRDDGERSGGDRGGRGGRNGGGRDRR) is disordered. Basic and acidic residues predominate over residues 702–720 (QSERPRRDDGERSGGDRGG).

It belongs to the polyribonucleotide nucleotidyltransferase family. It depends on Mg(2+) as a cofactor.

It localises to the cytoplasm. It carries out the reaction RNA(n+1) + phosphate = RNA(n) + a ribonucleoside 5'-diphosphate. Its function is as follows. Involved in mRNA degradation. Catalyzes the phosphorolysis of single-stranded polyribonucleotides processively in the 3'- to 5'-direction. The protein is Polyribonucleotide nucleotidyltransferase of Gemmatimonas aurantiaca (strain DSM 14586 / JCM 11422 / NBRC 100505 / T-27).